The chain runs to 163 residues: SsrA-binding protein (163 aa).

Over residues 138 to 157 the composition is skewed to basic and acidic residues; that stretch reads EDRRGAIAERESKREMDRAL. Positions 138 to 163 are disordered; the sequence is EDRRGAIAERESKREMDRALARGRRR.

It belongs to the SmpB family.

Its subcellular location is the cytoplasm. Required for rescue of stalled ribosomes mediated by trans-translation. Binds to transfer-messenger RNA (tmRNA), required for stable association of tmRNA with ribosomes. tmRNA and SmpB together mimic tRNA shape, replacing the anticodon stem-loop with SmpB. tmRNA is encoded by the ssrA gene; the 2 termini fold to resemble tRNA(Ala) and it encodes a 'tag peptide', a short internal open reading frame. During trans-translation Ala-aminoacylated tmRNA acts like a tRNA, entering the A-site of stalled ribosomes, displacing the stalled mRNA. The ribosome then switches to translate the ORF on the tmRNA; the nascent peptide is terminated with the 'tag peptide' encoded by the tmRNA and targeted for degradation. The ribosome is freed to recommence translation, which seems to be the essential function of trans-translation. The sequence is that of SsrA-binding protein from Anaeromyxobacter dehalogenans (strain 2CP-1 / ATCC BAA-258).